The sequence spans 826 residues: Putative pentatricopeptide repeat-containing protein At1g13630 (826 aa).

16 PPR repeats span residues 228-262 (NEHTYSTVVDGLCRQQKLEDAVLFLRTSEWKDIGP), 263-297 (SVVSFNSIMSGYCKLGFVDMAKSFFCTVLKCGLVP), 298-332 (SVYSHNILINGLCLVGSIAEALELASDMNKHGVEP), 333-367 (DSVTYNILAKGFHLLGMISGAWEVIRDMLDKGLSP), 368-402 (DVITYTILLCGQCQLGNIDMGLVLLKDMLSRGFEL), 404-438 (SIIPCSVMLSGLCKTGRIDEALSLFNQMKADGLSP), 439-473 (DLVAYSIVIHGLCKLGKFDMALWLYDEMCDKRILP), 474-508 (NSRTHGALLLGLCQKGMLLEARSLLDSLISSGETL), 509-543 (DIVLYNIVIDGYAKSGCIEEALELFKVVIETGITP), 544-578 (SVATFNSLIYGYCKTQNIAEARKILDVIKLYGLAP), 579-613 (SVVSYTTLMDAYANCGNTKSIDELRREMKAEGIPP), 614-648 (TNVTYSVIFKGLCRGWKHENCNHVLRERIFEKCKQ), 661-695 (DQITYNTIIQYLCRVKHLSGAFVFLEIMKSRNLDA), 696-730 (SSATYNILIDSLCVYGYIRKADSFIYSLQEQNVSL), 731-765 (SKFAYTTLIKAHCVKGDPEMAVKLFHQLLHRGFNV), and 766-800 (SIRDYSAVINRLCRRHLVNESKFFFCLMLSQGISP).

This sequence belongs to the PPR family. P subfamily.

This Arabidopsis thaliana (Mouse-ear cress) protein is Putative pentatricopeptide repeat-containing protein At1g13630.